The chain runs to 361 residues: sn-glycerol-3-phosphate import ATP-binding protein UgpC (361 aa).

An ABC transporter domain is found at 4 to 235 (LSLKGIRKSY…PETVFVAGFI (232 aa)). 37–44 (GPSGCGKS) contacts ATP.

The protein belongs to the ABC transporter superfamily. sn-glycerol-3-phosphate importer (TC 3.A.1.1.3) family. As to quaternary structure, the complex is composed of two ATP-binding proteins (UgpC), two transmembrane proteins (UgpA and UgpE) and a solute-binding protein (UgpB).

The protein localises to the cell inner membrane. The catalysed reaction is sn-glycerol 3-phosphate(out) + ATP + H2O = sn-glycerol 3-phosphate(in) + ADP + phosphate + H(+). In terms of biological role, part of the ABC transporter complex UgpBAEC involved in sn-glycerol-3-phosphate (G3P) import. Responsible for energy coupling to the transport system. This is sn-glycerol-3-phosphate import ATP-binding protein UgpC from Burkholderia ambifaria (strain ATCC BAA-244 / DSM 16087 / CCUG 44356 / LMG 19182 / AMMD) (Burkholderia cepacia (strain AMMD)).